The chain runs to 96 residues: Small ribosomal subunit protein bS6 (96 aa).

Belongs to the bacterial ribosomal protein bS6 family.

In terms of biological role, binds together with bS18 to 16S ribosomal RNA. In Natranaerobius thermophilus (strain ATCC BAA-1301 / DSM 18059 / JW/NM-WN-LF), this protein is Small ribosomal subunit protein bS6.